The primary structure comprises 208 residues: Dephospho-CoA kinase (208 aa).

A DPCK domain is found at 11 to 207 (VIGLTGGIAS…EYYLELAQHD (197 aa)). 19–24 (ASGKSA) is an ATP binding site.

The protein belongs to the CoaE family.

It is found in the cytoplasm. It carries out the reaction 3'-dephospho-CoA + ATP = ADP + CoA + H(+). It functions in the pathway cofactor biosynthesis; coenzyme A biosynthesis; CoA from (R)-pantothenate: step 5/5. Functionally, catalyzes the phosphorylation of the 3'-hydroxyl group of dephosphocoenzyme A to form coenzyme A. This Hahella chejuensis (strain KCTC 2396) protein is Dephospho-CoA kinase.